Consider the following 96-residue polypeptide: MTKSELIERLCSQQTHLSAKQVEDAIKEILEHMAGTLAEGDRIEIRGFGSFSLHYRAPRVGRNPKTGDKVELDGKYVPHFKPGKELRDRVNAAIAA.

This sequence belongs to the bacterial histone-like protein family. As to quaternary structure, heterodimer of an alpha and a beta chain.

Functionally, this protein is one of the two subunits of integration host factor, a specific DNA-binding protein that functions in genetic recombination as well as in transcriptional and translational control. The protein is Integration host factor subunit beta of Photobacterium profundum (strain SS9).